The chain runs to 311 residues: tRNA dimethylallyltransferase (311 aa).

11 to 18 contacts ATP; sequence GPTASGKS. Substrate is bound at residue 13 to 18; sequence TASGKS. 2 interaction with substrate tRNA regions span residues 36 to 39 and 160 to 164; these read DSMQ and QRLIR.

It belongs to the IPP transferase family. As to quaternary structure, monomer. Mg(2+) is required as a cofactor.

The enzyme catalyses adenosine(37) in tRNA + dimethylallyl diphosphate = N(6)-dimethylallyladenosine(37) in tRNA + diphosphate. Its function is as follows. Catalyzes the transfer of a dimethylallyl group onto the adenine at position 37 in tRNAs that read codons beginning with uridine, leading to the formation of N6-(dimethylallyl)adenosine (i(6)A). The sequence is that of tRNA dimethylallyltransferase from Rickettsia prowazekii (strain Madrid E).